The chain runs to 348 residues: Dihydroorotase (348 aa).

Zn(2+) contacts are provided by histidine 14 and histidine 16. Residues 16–18 and asparagine 42 each bind substrate; that span reads HLR. Zn(2+) contacts are provided by lysine 100, histidine 137, and histidine 175. N6-carboxylysine is present on lysine 100. A substrate-binding site is contributed by histidine 137. Leucine 220 serves as a coordination point for substrate. Residue aspartate 248 coordinates Zn(2+). Aspartate 248 is an active-site residue. Positions 252 and 264 each coordinate substrate.

Belongs to the metallo-dependent hydrolases superfamily. DHOase family. Class II DHOase subfamily. Homodimer. Zn(2+) serves as cofactor.

The enzyme catalyses (S)-dihydroorotate + H2O = N-carbamoyl-L-aspartate + H(+). The protein operates within pyrimidine metabolism; UMP biosynthesis via de novo pathway; (S)-dihydroorotate from bicarbonate: step 3/3. Its function is as follows. Catalyzes the reversible cyclization of carbamoyl aspartate to dihydroorotate. The protein is Dihydroorotase of Pseudomonas aeruginosa (strain LESB58).